Here is a 569-residue protein sequence, read N- to C-terminus: Zinc finger and BTB domain-containing protein 7A (569 aa).

Positions 34–101 constitute a BTB domain; that stretch reads CDVVILVEGR…AYTATLTVST (68 aa). The disordered stretch occupies residues 214–304; sequence YGPGPPADRP…LSGAAEGEDG (91 aa). The mediates interaction with KHDRBS1 stretch occupies residues 275 to 569; it reads EEEAAALSEA…VATAEGNFAT (295 aa). Low complexity predominate over residues 279-288; that stretch reads AALSEAAPEP. A phosphoserine mark is found at S331 and S335. The tract at residues 343-569 is mediates interaction with RELA; the sequence is MDYYLKYFSG…VATAEGNFAT (227 aa). Residues 371 to 569 are mediates interaction with SMAD4; the sequence is RAKAFQKCPI…VATAEGNFAT (199 aa). 2 consecutive C2H2-type zinc fingers follow at residues 376–398 and 404–426; these read QKCP…IRTH and YECN…MRKH. K430 participates in a covalent cross-link: Glycyl lysine isopeptide (Lys-Gly) (interchain with G-Cter in SUMO2). A C2H2-type 3 zinc finger spans residues 432-454; the sequence is YLCQQCGAAFAHNYDLKNHMRVH. The C2H2-type 4; atypical zinc-finger motif lies at 460–484; that stretch reads YQCDSCCKTFVRSDHLHRHLKKDGC. A disordered region spans residues 480 to 569; sequence KKDGCNGVPS…VATAEGNFAT (90 aa). Positions 498 to 519 are enriched in low complexity; the sequence is RGVPPDVPAGAGAPPGLPDAPR. Residue K527 forms a Glycyl lysine isopeptide (Lys-Gly) (interchain with G-Cter in SUMO2) linkage. S537 carries the post-translational modification Phosphoserine. Positions 548-557 are enriched in gly residues; the sequence is GSGGDDGAGG.

Homodimer. Interacts with BCL6. Interacts with RELA; involved in the control by RELA of the accessibility of target gene promoters. Interacts with AR (via NR LBD domain); the interaction is direct and androgen-dependent. Interacts with NCOR1. Interacts with NCOR2. Interacts with SMAD4; the interaction is direct and stimulated by TGFB1. Interacts with HDAC1. Interacts with SP1; ZBTB7A prevents the binding to GC-rich motifs in promoters and represses the transcriptional activity of SP1. Interacts with the DNA-dependent protein kinase complex/DNA-PKc. Interacts with KHDRBS1; negatively regulates KHDRBS1 splicing activity. In terms of processing, sumoylated. Undergoes sumoylation with SUMO1 that may regulate its transcriptional activity. In terms of tissue distribution, widely expressed. In normal thymus, expressed in medullary epithelial cells and Hassle's corpuscles (at protein level). In the spleen, mainly expressed in the white pulp germinal centers (at protein level). Up-regulated in thymic lymphomas.

It is found in the nucleus. Its function is as follows. Transcription factor that represses the transcription of a wide range of genes involved in cell proliferation and differentiation. Directly and specifically binds to the consensus sequence 5'-[GA][CA]GACCCCCCCCC-3' and represses transcription both by regulating the organization of chromatin and through the direct recruitment of transcription factors to gene regulatory regions. Negatively regulates SMAD4 transcriptional activity in the TGF-beta signaling pathway through these two mechanisms. That is, recruits the chromatin regulator HDAC1 to the SMAD4-DNA complex and in parallel prevents the recruitment of the transcriptional activators CREBBP and EP300. Collaborates with transcription factors like RELA to modify the accessibility of gene transcription regulatory regions to secondary transcription factors. Also directly interacts with transcription factors like SP1 to prevent their binding to DNA. Functions as an androgen receptor/AR transcriptional corepressor by recruiting NCOR1 and NCOR2 to the androgen response elements/ARE on target genes. Thereby, negatively regulates androgen receptor signaling and androgen-induced cell proliferation. Involved in the switch between fetal and adult globin expression during erythroid cells maturation. Through its interaction with the NuRD complex regulates chromatin at the fetal globin genes to repress their transcription. Specifically represses the transcription of the tumor suppressor ARF isoform from the CDKN2A gene. Efficiently abrogates E2F1-dependent CDKN2A transactivation. Regulates chondrogenesis through the transcriptional repression of specific genes via a mechanism that also requires histone deacetylation. Regulates cell proliferation through the transcriptional regulation of genes involved in glycolysis. Involved in adipogenesis through the regulation of genes involved in adipocyte differentiation. Plays a key role in the differentiation of lymphoid progenitors into B and T lineages. Promotes differentiation towards the B lineage by inhibiting the T-cell instructive Notch signaling pathway through the specific transcriptional repression of Notch downstream target genes. Also regulates osteoclast differentiation. May also play a role, independently of its transcriptional activity, in double-strand break repair via classical non-homologous end joining/cNHEJ. Recruited to double-strand break sites on damage DNA, interacts with the DNA-dependent protein kinase complex and directly regulates its stability and activity in DNA repair. May also modulate the splicing activity of KHDRBS1 toward BCL2L1 in a mechanism which is histone deacetylase-dependent and thereby negatively regulates the pro-apoptotic effect of KHDRBS1. This is Zinc finger and BTB domain-containing protein 7A from Mus musculus (Mouse).